Reading from the N-terminus, the 411-residue chain is Citrate synthase (411 aa).

Catalysis depends on residues H304 and D363.

The protein belongs to the citrate synthase family.

It carries out the reaction oxaloacetate + acetyl-CoA + H2O = citrate + CoA + H(+). Its pathway is carbohydrate metabolism; tricarboxylic acid cycle; isocitrate from oxaloacetate: step 1/2. The polypeptide is Citrate synthase (gltA) (Rickettsia parkeri).